We begin with the raw amino-acid sequence, 586 residues long: MLDERGALARGAAEAIRAGYEAYQAERARITARARGRFEARDWAGAQRDARERLDLRDGVVHRTVGEVRAELGGAVQDREVWRRAKEAFEAVAAARPDAEIAGSFFNSVTRRVLTTVGVDPAIEFLAADAPPPREDPPQHRAFAREATTEALLARILRAAPISAPFEDLARDARLAALELDAHVRGLPDRQPIDAVELARPVFYRGKGAYLVGRIRRGRHLTPLVLALAHGDRGVALDAVLFTEEDVSIVFGFTRSYFHVALERPRAMVAFLSTLLPLKRRSELYTGLGYHKHGKAELYREVAQHLAEGDDRFVPARGDRGLVMCVFTLPGLDVIFKVIRDRFAPPKQTTRREVMDRYRHVFRHDRAGRLVDAQEYEHLAFPAARFSPALLEELRTECGDGVRVAGGEVAIRHLYAERRVTPLNLFVREADEWTARQAVLDFGCALRDLAATDTFPGDLLLKNFGVTRHGRVIFYDYDELTRVTDCNFRDLPGAGPGDGDDGWGGGPDAGYDGGDPPFYVGPADVFPEELLPFLGLTGRLREVFLRAHGELLTGRWWRDIQARLRAGEIVDIFPYREEQRLRHAHP.

Residues 316–322 (ARGDRGL) and K337 each bind ATP. The active site involves D372.

It belongs to the AceK family.

It localises to the cytoplasm. The enzyme catalyses L-seryl-[isocitrate dehydrogenase] + ATP = O-phospho-L-seryl-[isocitrate dehydrogenase] + ADP + H(+). Functionally, bifunctional enzyme which can phosphorylate or dephosphorylate isocitrate dehydrogenase (IDH) on a specific serine residue. This is a regulatory mechanism which enables bacteria to bypass the Krebs cycle via the glyoxylate shunt in response to the source of carbon. When bacteria are grown on glucose, IDH is fully active and unphosphorylated, but when grown on acetate or ethanol, the activity of IDH declines drastically concomitant with its phosphorylation. In Anaeromyxobacter dehalogenans (strain 2CP-C), this protein is Isocitrate dehydrogenase kinase/phosphatase.